Consider the following 146-residue polypeptide: Hemoglobin subunit beta (146 aa).

The Globin domain maps to 2-146 (HWTAEEKQLI…VAHALARKYH (145 aa)). Heme b-binding residues include histidine 63 and histidine 92.

The protein belongs to the globin family. In terms of assembly, heterotetramer of two alpha chains and two beta chains. Red blood cells.

Its function is as follows. Involved in oxygen transport from the lung to the various peripheral tissues. This is Hemoglobin subunit beta (HBB) from Anas platyrhynchos platyrhynchos (Northern mallard).